A 437-amino-acid chain; its full sequence is GTPase Der (437 aa).

EngA-type G domains lie at 4–168 (NIVA…PEKP) and 178–353 (PRFA…ENRK). GTP is bound by residues 10-17 (GRPNVGKS), 57-61 (DTGGY), 120-123 (NKVD), 184-191 (GRPNAGKS), 231-235 (DTAGI), and 296-299 (NKWD). A KH-like domain is found at 354-437 (QRISTSKFNE…VPIDIYIREK (84 aa)).

This sequence belongs to the TRAFAC class TrmE-Era-EngA-EngB-Septin-like GTPase superfamily. EngA (Der) GTPase family. In terms of assembly, associates with the 50S ribosomal subunit.

In terms of biological role, GTPase that plays an essential role in the late steps of ribosome biogenesis. The polypeptide is GTPase Der (Flavobacterium johnsoniae (strain ATCC 17061 / DSM 2064 / JCM 8514 / BCRC 14874 / CCUG 350202 / NBRC 14942 / NCIMB 11054 / UW101) (Cytophaga johnsonae)).